The primary structure comprises 291 residues: 4-hydroxy-tetrahydrodipicolinate synthase (291 aa).

Thr47 is a pyruvate binding site. The Proton donor/acceptor role is filled by Tyr134. Catalysis depends on Lys162, which acts as the Schiff-base intermediate with substrate. Ile205 provides a ligand contact to pyruvate.

This sequence belongs to the DapA family. As to quaternary structure, homotetramer; dimer of dimers.

It is found in the cytoplasm. It carries out the reaction L-aspartate 4-semialdehyde + pyruvate = (2S,4S)-4-hydroxy-2,3,4,5-tetrahydrodipicolinate + H2O + H(+). It functions in the pathway amino-acid biosynthesis; L-lysine biosynthesis via DAP pathway; (S)-tetrahydrodipicolinate from L-aspartate: step 3/4. In terms of biological role, catalyzes the condensation of (S)-aspartate-beta-semialdehyde [(S)-ASA] and pyruvate to 4-hydroxy-tetrahydrodipicolinate (HTPA). The chain is 4-hydroxy-tetrahydrodipicolinate synthase from Methanoculleus marisnigri (strain ATCC 35101 / DSM 1498 / JR1).